A 562-amino-acid chain; its full sequence is 4-coumarate--CoA ligase-like 9 (562 aa).

ATP contacts are provided by Ser212, Ser213, Gly214, Thr215, Thr216, and Lys220. Arg281 provides a ligand contact to CoA. Residues 283-352 (ELEAMFKAVE…QKFPDVDIVQ (70 aa)) are SBD1. The ATP site is built by Gln352, Gly353, Thr357, Asp438, and Arg453. Residues 353 to 417 (GYGLTESSGP…LRGPVIMKGY (65 aa)) are SBD2. CoA is bound by residues Lys461 and Ala462. Lys544 is a binding site for ATP. The Microbody targeting signal motif lies at 560 to 562 (SKL).

Belongs to the ATP-dependent AMP-binding enzyme family. Requires Mg(2+) as cofactor. Expressed at low level in leaves.

Its subcellular location is the peroxisome. It carries out the reaction (9S,13S,15Z)-12-oxophyto-10,15-dienoate + ATP + CoA = (10Z,15Z)-12-oxophytodienoyl-CoA + AMP + diphosphate. It catalyses the reaction hexadecanoate + ATP + CoA = hexadecanoyl-CoA + AMP + diphosphate. The catalysed reaction is (9Z)-octadecenoate + ATP + CoA = (9Z)-octadecenoyl-CoA + AMP + diphosphate. The enzyme catalyses octadecanoate + ATP + CoA = octadecanoyl-CoA + AMP + diphosphate. It carries out the reaction tetradecanoate + ATP + CoA = tetradecanoyl-CoA + AMP + diphosphate. It catalyses the reaction dodecanoate + ATP + CoA = dodecanoyl-CoA + AMP + diphosphate. The catalysed reaction is decanoate + ATP + CoA = decanoyl-CoA + AMP + diphosphate. The enzyme catalyses octanoate + ATP + CoA = octanoyl-CoA + AMP + diphosphate. It carries out the reaction (9Z,12Z)-octadecadienoate + ATP + CoA = (9Z,12Z)-octadecadienoyl-CoA + AMP + diphosphate. It catalyses the reaction (9Z,12Z,15Z)-octadecatrienoate + ATP + CoA = (9Z,12Z,15Z)-octadecatrienoyl-CoA + AMP + diphosphate. The catalysed reaction is nonanoate + ATP + CoA = nonanoyl-CoA + AMP + diphosphate. Functionally, contributes to jasmonic acid biosynthesis by initiating the beta-oxidative chain shortening of its precursors. Converts 12-oxo-phytodienoic acid (OPDA) into OPDA-CoA. Follows a two-step reaction mechanism, wherein the carboxylate substrate first undergoes adenylation by ATP, followed by a thioesterification in the presence of CoA to yield the final CoA thioester. The polypeptide is 4-coumarate--CoA ligase-like 9 (Arabidopsis thaliana (Mouse-ear cress)).